Consider the following 342-residue polypeptide: Nuclear hormone receptor family member nhr-150 (342 aa).

The nuclear receptor DNA-binding region spans 1-71; the sequence is MCQVCGAAEA…AGMTSKKIQS (71 aa). Residues 2-22 form an NR C4-type zinc finger; sequence CQVCGAAEADLHFGGISCRAC. The NR C4-type; degenerate zinc-finger motif lies at 39-54; the sequence is CTCKTRILDSHPCRSC. An NR LBD domain is found at 94–341; the sequence is SARIIPRSSL…GFMEIIRESK (248 aa).

The protein belongs to the nuclear hormone receptor family.

It is found in the nucleus. Its function is as follows. Orphan nuclear receptor. The sequence is that of Nuclear hormone receptor family member nhr-150 (nhr-150) from Caenorhabditis elegans.